A 301-amino-acid polypeptide reads, in one-letter code: Acetylglutamate kinase (301 aa).

Substrate-binding positions include 71–72 (GG), R93, and N198.

Belongs to the acetylglutamate kinase family. ArgB subfamily.

Its subcellular location is the cytoplasm. The catalysed reaction is N-acetyl-L-glutamate + ATP = N-acetyl-L-glutamyl 5-phosphate + ADP. It participates in amino-acid biosynthesis; L-arginine biosynthesis; N(2)-acetyl-L-ornithine from L-glutamate: step 2/4. Functionally, catalyzes the ATP-dependent phosphorylation of N-acetyl-L-glutamate. In Rhizorhabdus wittichii (strain DSM 6014 / CCUG 31198 / JCM 15750 / NBRC 105917 / EY 4224 / RW1) (Sphingomonas wittichii), this protein is Acetylglutamate kinase.